The sequence spans 430 residues: Asparagine--tRNA ligase (430 aa).

It belongs to the class-II aminoacyl-tRNA synthetase family. Homodimer.

The protein resides in the cytoplasm. It carries out the reaction tRNA(Asn) + L-asparagine + ATP = L-asparaginyl-tRNA(Asn) + AMP + diphosphate + H(+). This is Asparagine--tRNA ligase from Staphylococcus saprophyticus subsp. saprophyticus (strain ATCC 15305 / DSM 20229 / NCIMB 8711 / NCTC 7292 / S-41).